The primary structure comprises 146 residues: Phospholipase A2 (146 aa).

An N-terminal signal peptide occupies residues 1 to 18; the sequence is MAFLVFAFLTLMAVETYG. Disulfide bonds link Cys44–Cys137, Cys46–Cys62, Cys61–Cys117, Cys67–Cys144, Cys68–Cys110, Cys77–Cys103, and Cys95–Cys108. Ca(2+)-binding residues include Tyr45, Gly47, and Gly49. His65 is an active-site residue. Asp66 contributes to the Ca(2+) binding site. A glycan (N-linked (GlcNAc...) asparagine) is linked at Asn85. Residue Asp111 is part of the active site. Asn126 is a glycosylation site (N-linked (GlcNAc...) asparagine).

Requires Ca(2+) as cofactor. In terms of processing, N-glycosylated. Glycosylated with mannose chains including Man2(GlcNAc), Man2(GlcNAc)2, Man2(GlcNAc)3, Man2(GlcNAc)4 and Man2(GlcNAc)5. In terms of tissue distribution, expressed by the skin glands (at protein level).

The protein localises to the secreted. The catalysed reaction is a 1,2-diacyl-sn-glycero-3-phosphocholine + H2O = a 1-acyl-sn-glycero-3-phosphocholine + a fatty acid + H(+). Functionally, PLA2 catalyzes the calcium-dependent hydrolysis of the 2-acyl groups in 3-sn-phosphoglycerides. The sequence is that of Phospholipase A2 from Pithecopus azureus (Orange-legged monkey tree frog).